The primary structure comprises 240 residues: Uridylate kinase (240 aa).

Position 13–16 (Lys13–Gly16) interacts with ATP. An involved in allosteric activation by GTP region spans residues Gly21–Gly26. Gly55 contributes to the UMP binding site. Gly56 and Arg60 together coordinate ATP. Residues Asp75 and Thr136 to Thr143 each bind UMP. Residues Thr163, Gln164, Tyr169, and Asp172 each contribute to the ATP site.

Belongs to the UMP kinase family. Homohexamer.

It localises to the cytoplasm. It carries out the reaction UMP + ATP = UDP + ADP. It functions in the pathway pyrimidine metabolism; CTP biosynthesis via de novo pathway; UDP from UMP (UMPK route): step 1/1. With respect to regulation, allosterically activated by GTP. Inhibited by UTP. Functionally, catalyzes the reversible phosphorylation of UMP to UDP. The polypeptide is Uridylate kinase (Rhizobium meliloti (strain 1021) (Ensifer meliloti)).